The primary structure comprises 198 residues: MAAAMGLERKAKVAEVALRCAVCALAALAAALVGTGSQTRTFFSLEKKARFTDMKALVLLVAAHGAAAVYSLLQLARCAAAAAWKGGSNGGAAVVAWSVFSCDQAVAYALMAATAAALQSSVVGKRGQPELQWMPVCGLYGAFCRRVGEGLAAAVAAGLAAVLLAAVSAFNLFRLYGGGGGGRKSSAGAVSGNGANTW.

Residues 1–12 (MAAAMGLERKAK) are Cytoplasmic-facing. Residues 13–33 (VAEVALRCAVCALAALAAALV) traverse the membrane as a helical segment. Over 34–55 (GTGSQTRTFFSLEKKARFTDMK) the chain is Extracellular. Residues 56-76 (ALVLLVAAHGAAAVYSLLQLA) traverse the membrane as a helical segment. Over 77–91 (RCAAAAAWKGGSNGG) the chain is Cytoplasmic. The chain crosses the membrane as a helical span at residues 92–112 (AAVVAWSVFSCDQAVAYALMA). At 113–149 (ATAAALQSSVVGKRGQPELQWMPVCGLYGAFCRRVGE) the chain is on the extracellular side. Residues 150–170 (GLAAAVAAGLAAVLLAAVSAF) form a helical membrane-spanning segment. Residues 171 to 198 (NLFRLYGGGGGGRKSSAGAVSGNGANTW) lie on the Cytoplasmic side of the membrane.

The protein belongs to the Casparian strip membrane proteins (CASP) family. Homodimer and heterodimers.

The protein localises to the cell membrane. This is CASP-like protein 2B1 from Oryza sativa subsp. japonica (Rice).